Consider the following 175-residue polypeptide: Bacterial proteasome activator (175 aa).

The interval 152–175 is disordered; that stretch reads LPPGIQVPGAQRGGATHPGTGQYL. Residues 173–175 carry the HbYX motif motif; sequence QYL.

Belongs to the Bpa family. In terms of assembly, forms a homooligomeric, either hexameric or heptameric, ring-like structure which stacks co-axially with the proteasomal alpha-rings.

Its function is as follows. Interacts with the core proteasome alpha-subunit (PrcA) through its C-terminal hydrophobic-tyrosine-X motif (HbYX motif). Interaction of Bpa with the proteasome stimulates proteasomal peptidase and casein degradation activity, which suggests Bpa could play a role in the removal of non-native or damaged proteins by influencing the conformation of the proteasome complex upon interaction. The chain is Bacterial proteasome activator from Mycolicibacterium smegmatis (strain ATCC 700084 / mc(2)155) (Mycobacterium smegmatis).